Reading from the N-terminus, the 599-residue chain is Putative ATP-dependent helicase YeeB (599 aa).

In terms of domain architecture, Helicase ATP-binding spans A30–D207. A43–S50 is an ATP binding site. Positions D154–H157 match the DEAH box motif. The Helicase C-terminal domain maps to Q236–S408.

Belongs to the helicase family.

The sequence is that of Putative ATP-dependent helicase YeeB (yeeB) from Bacillus subtilis (strain 168).